A 430-amino-acid polypeptide reads, in one-letter code: Tryptophan synthase beta chain (430 aa).

Lysine 95 carries the N6-(pyridoxal phosphate)lysine modification.

Belongs to the TrpB family. As to quaternary structure, tetramer of two alpha and two beta chains. Pyridoxal 5'-phosphate is required as a cofactor.

It carries out the reaction (1S,2R)-1-C-(indol-3-yl)glycerol 3-phosphate + L-serine = D-glyceraldehyde 3-phosphate + L-tryptophan + H2O. Its pathway is amino-acid biosynthesis; L-tryptophan biosynthesis; L-tryptophan from chorismate: step 5/5. The beta subunit is responsible for the synthesis of L-tryptophan from indole and L-serine. In Halobacterium salinarum (strain ATCC 29341 / DSM 671 / R1), this protein is Tryptophan synthase beta chain.